A 478-amino-acid polypeptide reads, in one-letter code: MQNLPALLLFCGVVCSAYPVDRAAEDENNNMELTQQYLENYYNLGKDVKPFVRRRNSGPVVEKIREMQKFLGLEVTGKVDSDTLAMMRRPRCGVPDVGDFTTFPGMPKWRKTHLTYRIMNYTPDLPRDAVDSAIEKALNVWKEVTPLTFSRTDEGEADIKISFAVRDHGDFNPFDGPGNVLGHAYPPGPGIYGDAHFDDDEQWTSDTSGTNLFLVAAHELGHSLGLFHSADPSALMYPVYNVLADLARFHLSQDDVNGIQSLYGGPPSDSSNDPVVPTESVPPGPGTPAACDPTLSFDAISTLRGEFLFFKDRHFWRKSLRTLEPGFYLISSFWPSLPSGLDAAYEETSKDIVFIFKGNQFWAMRGTEVQAGYPKGIHTLGFPPTVKKIDAAVFDKEKKKTYFFVGDKYWRFDEKRQSMEPGFPKQIAEDFPGVDSKVDAAFEAFGFYYFFNGSSQLEFDPNAKKVTHVLKSNSWLNC.

The signal sequence occupies residues 1-17 (MQNLPALLLFCGVVCSA). The propeptide at 18–99 (YPVDRAAEDE…PRCGVPDVGD (82 aa)) is activation peptide. The short motif at 90 to 97 (PRCGVPDV) is the Cysteine switch element. C92 is a binding site for Zn(2+). Residues D124 and D158 each coordinate Ca(2+). H168 and D170 together coordinate Zn(2+). Ca(2+) is bound by residues D175, G176, G178, and V180. H183 is a Zn(2+) binding site. Positions 190 and 194 each coordinate Ca(2+). H196 is a binding site for Zn(2+). The Ca(2+) site is built by D198, D199, and E201. Position 218 (H218) interacts with Zn(2+). E219 is a catalytic residue. Zn(2+) contacts are provided by H222 and H228. A disordered region spans residues 260–286 (QSLYGGPPSDSSNDPVVPTESVPPGPG). The segment covering 266–277 (PPSDSSNDPVVP) has biased composition (low complexity). 4 Hemopexin repeats span residues 288–337 (PAAC…WPSL), 338–384 (PSGL…GFPP), 386–434 (VKKI…FPGV), and 435–478 (DSKV…WLNC). Cysteines 291 and 478 form a disulfide. A Ca(2+)-binding site is contributed by D298. The Ca(2+) site is built by D390 and D439. N452 is a glycosylation site (N-linked (GlcNAc...) asparagine).

This sequence belongs to the peptidase M10A family. It depends on Ca(2+) as a cofactor. Zn(2+) is required as a cofactor.

It localises to the secreted. It is found in the extracellular space. The protein localises to the extracellular matrix. It catalyses the reaction Preferential cleavage where P1', P2' and P3' are hydrophobic residues.. Metalloproteinase with a rather broad substrate specificity that can degrade fibronectin, laminin, gelatins of type I, III, IV, and V; collagens III, IV, X, and IX, and cartilage proteoglycans. Activates different molecules including growth factors, plasminogen or other matrix metalloproteinases such as MMP9. Once released into the extracellular matrix (ECM), the inactive pro-enzyme is activated by the plasmin cascade signaling pathway. Also acts intracellularly. For example, in dopaminergic neurons, gets activated by the serine protease HTRA2 upon stress and plays a pivotal role in DA neuronal degeneration by mediating microglial activation and alpha-synuclein/SNCA cleavage. In addition, plays a role in immune response and possesses antiviral activity against various viruses. Mechanistically, translocates from the cytoplasm into the cell nucleus upon virus infection to influence NF-kappa-B activities. This Canis lupus familiaris (Dog) protein is Stromelysin-1 (MMP3).